Consider the following 388-residue polypeptide: Amylovoran biosynthesis protein AmsL (388 aa).

The next 6 membrane-spanning stretches (helical) occupy residues 24-44 (VLLS…ISWF), 47-67 (LPQL…LGSL), 97-117 (FTVI…LGLF), 231-251 (FVIM…SPVI), 297-317 (FYWN…VWIW), and 359-379 (ISVS…NLFI).

This sequence belongs to the polysaccharide synthase family.

It localises to the cell membrane. It functions in the pathway glycan metabolism; exopolysaccharide biosynthesis. In terms of biological role, involved in the biosynthesis of amylovoran which functions as a virulence factor. In Erwinia amylovora (Fire blight bacteria), this protein is Amylovoran biosynthesis protein AmsL (amsL).